The chain runs to 133 residues: Ribonuclease P protein component (133 aa).

This sequence belongs to the RnpA family. In terms of assembly, consists of a catalytic RNA component (M1 or rnpB) and a protein subunit.

The catalysed reaction is Endonucleolytic cleavage of RNA, removing 5'-extranucleotides from tRNA precursor.. In terms of biological role, RNaseP catalyzes the removal of the 5'-leader sequence from pre-tRNA to produce the mature 5'-terminus. It can also cleave other RNA substrates such as 4.5S RNA. The protein component plays an auxiliary but essential role in vivo by binding to the 5'-leader sequence and broadening the substrate specificity of the ribozyme. This Paramagnetospirillum magneticum (strain ATCC 700264 / AMB-1) (Magnetospirillum magneticum) protein is Ribonuclease P protein component.